Reading from the N-terminus, the 394-residue chain is Elongation factor Tu (394 aa).

Positions 10–204 (KPHVNVGTIG…AVDEWIPTPT (195 aa)) constitute a tr-type G domain. Positions 19–26 (GHIDHGKT) are G1. A GTP-binding site is contributed by 19–26 (GHIDHGKT). T26 contacts Mg(2+). The G2 stretch occupies residues 60–64 (GITIN). The G3 stretch occupies residues 81-84 (DCPG). GTP contacts are provided by residues 81–85 (DCPGH) and 136–139 (NKCD). A G4 region spans residues 136-139 (NKCD). Positions 174–176 (SAL) are G5.

This sequence belongs to the TRAFAC class translation factor GTPase superfamily. Classic translation factor GTPase family. EF-Tu/EF-1A subfamily. In terms of assembly, monomer.

It localises to the cytoplasm. The catalysed reaction is GTP + H2O = GDP + phosphate + H(+). In terms of biological role, GTP hydrolase that promotes the GTP-dependent binding of aminoacyl-tRNA to the A-site of ribosomes during protein biosynthesis. The chain is Elongation factor Tu from Mycoplasma genitalium (strain ATCC 33530 / DSM 19775 / NCTC 10195 / G37) (Mycoplasmoides genitalium).